The sequence spans 304 residues: Phospholipase A1 (304 aa).

The cysteines at positions 6 and 90 are disulfide-linked. Residue asparagine 61 is glycosylated (N-linked (GlcNAc...) asparagine). Serine 140 (nucleophile) is an active-site residue. Aspartate 168 (charge relay system) is an active-site residue. Disulfide bonds link cysteine 179–cysteine 184 and cysteine 222–cysteine 231. The active-site Charge relay system is histidine 233. Cystine bridges form between cysteine 248–cysteine 272, cysteine 249–cysteine 297, and cysteine 265–cysteine 270.

Belongs to the AB hydrolase superfamily. Lipase family. As to expression, expressed by the venom gland.

It localises to the secreted. It catalyses the reaction a 1,2-diacyl-sn-glycero-3-phosphocholine + H2O = a 2-acyl-sn-glycero-3-phosphocholine + a fatty acid + H(+). Its function is as follows. Catalyzes the hydrolysis of phosphatidylcholine with phospholipase A1 activity. May act as an allergen and induce hemolytic activity. This Vespa velutina (Asian yellow-legged hornet) protein is Phospholipase A1.